The primary structure comprises 256 residues: DNA repair protein RecO (256 aa).

It belongs to the RecO family.

Functionally, involved in DNA repair and RecF pathway recombination. The protein is DNA repair protein RecO of Streptococcus pneumoniae serotype 19F (strain G54).